A 602-amino-acid chain; its full sequence is (R)-limonene synthase (602 aa).

The Mg(2+) site is built by Asp-356, Asp-360, Asp-500, Thr-504, and Glu-508. Residues 356 to 360 carry the DDXXD motif motif; the sequence is DDVYD.

This sequence belongs to the terpene synthase family. The cofactor is Mg(2+). Mn(2+) serves as cofactor.

The catalysed reaction is (2E)-geranyl diphosphate = (4R)-limonene + diphosphate. Functionally, catalyzes the formation of (R)-(+)-limonene, terpinolene, (1R,5S)-(+)-camphene, (1R,5R)-(+)-alpha-pinene, beta-myrcene and traces of alpha-phellandrene. The protein is (R)-limonene synthase of Lavandula angustifolia (Lavender).